A 368-amino-acid chain; its full sequence is UPF0284 protein Cyan7425_0342 (368 aa).

The protein belongs to the UPF0284 family.

The protein is UPF0284 protein Cyan7425_0342 of Cyanothece sp. (strain PCC 7425 / ATCC 29141).